The chain runs to 270 residues: Beta carbonic anhydrase 1 (270 aa).

The Zn(2+) site is built by Cys-39, Asp-41, His-105, and Cys-108.

Belongs to the beta-class carbonic anhydrase family. The cofactor is Zn(2+).

It carries out the reaction hydrogencarbonate + H(+) = CO2 + H2O. Functionally, reversible hydration of carbon dioxide. This is Beta carbonic anhydrase 1 from Caenorhabditis briggsae.